The primary structure comprises 614 residues: Syringomycin synthase SyrB1 (614 aa).

The Carrier domain maps to 535-610 (KGLSEQEHFV…VLADHITRSL (76 aa)). Residue serine 570 is modified to O-(pantetheine 4'-phosphoryl)serine.

The protein belongs to the ATP-dependent AMP-binding enzyme family. Requires pantetheine 4'-phosphate as cofactor.

It carries out the reaction holo-[peptidyl-carrier protein] + L-threonine + ATP = L-threonyl-[peptidyl-carrier protein] + AMP + diphosphate. In terms of biological role, involved in the biosynthesis of syringomycin E, a cyclic lipodepsinonapeptide toxin with phytotoxic activity. Specifically adenylates L-threonine and loads it onto its peptidyl carrier domain, via a thioester linkage to the phosphopanthetheine moiety. Is highly specific for L-threonine. This Pseudomonas syringae pv. syringae protein is Syringomycin synthase SyrB1.